The following is a 150-amino-acid chain: Large ribosomal subunit protein bL9 (150 aa).

The protein belongs to the bacterial ribosomal protein bL9 family.

Binds to the 23S rRNA. The protein is Large ribosomal subunit protein bL9 of Albidiferax ferrireducens (strain ATCC BAA-621 / DSM 15236 / T118) (Rhodoferax ferrireducens).